A 432-amino-acid chain; its full sequence is Luc7-like protein 3 (432 aa).

Met-1 is subject to N-acetylmethionine. Ser-3, Ser-110, and Ser-115 each carry phosphoserine. A coiled-coil region spans residues 124 to 181 (KNEEKIQVLTDKIDVLLQQIEELGSEGKVEEAQGMMKLVEQLKEERELLRSTTSTIES). At Lys-231 the chain carries N6-acetyllysine. Basic and acidic residues predominate over residues 234–287 (LRKRTEEPDRDERLKKEKQEREEREKEREREREERERKRRREEEEREKERARDR). The segment at 234 to 432 (LRKRTEEPDR…IKSEGDTQSN (199 aa)) is disordered. Residues 288 to 301 (ERRKRSRSRSRHSS) are compositionally biased toward basic residues. Residues 302–311 (RTSDRRCSRS) show a composition bias toward basic and acidic residues. A compositionally biased stretch (basic residues) spans 312 to 367 (RDHKRSRSRDRRRSRSRDRRRSRSHDRSERKHRSRSRDRRRSKSRDRKSYKHRSKS). Positions 368 to 414 (RDREQDRKSKEKEKKGSDDKKSSVKSSSREKQSEDTNPESKESDTKN) are enriched in basic and acidic residues. At Ser-420 the chain carries Phosphoserine. A compositionally biased stretch (basic and acidic residues) spans 421 to 432 (EDIKSEGDTQSN). Lys-424 participates in a covalent cross-link: Glycyl lysine isopeptide (Lys-Gly) (interchain with G-Cter in SUMO1); alternate. Lys-424 participates in a covalent cross-link: Glycyl lysine isopeptide (Lys-Gly) (interchain with G-Cter in SUMO2); alternate. Phosphoserine is present on residues Ser-425 and Ser-431.

It belongs to the Luc7 family. May interact with SFRS1 and form homodimers. Interacts with JMJD6. Interacts with RBM25. Interacts with RSRC1 (via Arg/Ser-rich domain). Interacts with RRP1B.

It is found in the nucleus speckle. Its function is as follows. Binds cAMP regulatory element DNA sequence. May play a role in RNA splicing. This is Luc7-like protein 3 (Luc7l3) from Mus musculus (Mouse).